The following is a 156-amino-acid chain: Protein LlR18A (156 aa).

The trans-zeatin site is built by N8 and D28. Residues P32 and I38 each contribute to the Ca(2+) site. Trans-zeatin contacts are provided by K54, D133, and K136.

The protein belongs to the BetVI family. Expressed constitutively in roots.

It is found in the cytoplasm. Its subcellular location is the cytosol. Functionally, class II ribonuclease (RNase). Binds to cytokinins. Interacts with melatonin. The protein is Protein LlR18A (LLR18A) of Lupinus luteus (European yellow lupine).